The sequence spans 571 residues: Hemagglutinin-neuraminidase (571 aa).

Residues Met-1–Arg-26 lie on the Intravirion side of the membrane. The chain crosses the membrane as a helical span at residues Ile-27–Ser-47. Residues Met-48–Val-571 are Virion surface-facing. An N-linked (GlcNAc...) asparagine; by host glycan is attached at Asn-119. The tract at residues Gly-124 to Tyr-152 is important for interaction with fusion/F protein. 3 cysteine pairs are disulfide-bonded: Cys-172–Cys-196, Cys-186–Cys-247, and Cys-238–Cys-251. Residues Asn-234–Ser-239 are involved in neuraminidase activity. N-linked (GlcNAc...) asparagine; by host glycosylation is found at Asn-341 and Asn-433. Intrachain disulfides connect Cys-344-Cys-461 and Cys-455-Cys-465. Asn-481, Asn-508, and Asn-538 each carry an N-linked (GlcNAc...) asparagine; by host glycan. An intrachain disulfide couples Cys-531 to Cys-542.

Belongs to the paramyxoviruses hemagglutinin-neuraminidase family. In terms of assembly, homotetramer; composed of disulfide-linked homodimers. Interacts with F protein trimer. Interacts with host CG-1B; this interaction inhibits viral adsorption and replication rather than internalization.

The protein resides in the virion membrane. The protein localises to the host cell membrane. It catalyses the reaction Hydrolysis of alpha-(2-&gt;3)-, alpha-(2-&gt;6)-, alpha-(2-&gt;8)- glycosidic linkages of terminal sialic acid residues in oligosaccharides, glycoproteins, glycolipids, colominic acid and synthetic substrates.. In terms of biological role, mediates the viral entry into the host cell together with fusion/F protein. Attaches the virus to sialic acid-containing cell receptors and thereby initiates infection. Binding of HN protein to the receptor induces a conformational change that allows the F protein to trigger virion/cell membranes fusion. Neuraminidase activity ensures the efficient spread of the virus by dissociating the mature virions from the neuraminic acid containing glycoproteins. The protein is Hemagglutinin-neuraminidase (HN) of Gallus gallus (Chicken).